We begin with the raw amino-acid sequence, 3598 residues long: Dystrophin, isoforms A/C/F/G/H (3598 aa).

The interval 1–230 (MEPGILIDER…YVMCLYHAME (230 aa)) is actin-binding. Calponin-homology (CH) domains are found at residues 12–116 (HIQK…LEFN) and 127–230 (NGVE…HAME). The interval 233-297 (RTRQQEQEQD…SGELKTHSMR (65 aa)) is disordered. Polar residues predominate over residues 267-286 (NDQTSLGLYTSDSAGSMEQR). Spectrin repeat units lie at residues 307–420 (VEIS…KILM), 423–525 (AEFQ…KLQQ), 851–963 (QDFG…AIEN), 1056–1170 (SHID…LLEH), 1173–1275 (TQLG…LLEQ), and 1381–1483 (SYES…TLER). Disordered regions lie at residues 1633–1696 (ARNT…VMPD), 1716–1742 (SLNP…SSPA), 1799–1854 (EDSD…ENTS), 1878–1941 (RDIL…EPLV), and 2204–2233 (GPRI…NEPS). Low complexity predominate over residues 1663–1679 (SGESPSSAHTSSSESPT). Basic and acidic residues predominate over residues 1803–1816 (SSVRVDSQGKEMRR). Phosphoserine occurs at positions 1832 and 1838. The span at 1834-1843 (NDEDSAEQEE) shows a compositional bias: acidic residues. The segment covering 1878–1893 (RDILRDSEEEEPKTPD) has biased composition (basic and acidic residues). The span at 2218-2233 (SAATMSCRSEYNNEPS) shows a compositional bias: polar residues. Spectrin repeat units lie at residues 2237 to 2363 (ALAG…QLKN), 2366 to 2472 (SDSQ…QLHA), 2475 to 2576 (HSLQ…RLES), 2579 to 2712 (EHWN…RLDE), and 2715 to 2819 (TKMR…VLCQ). Residues 2655–2679 (VSDTSDTEANHDSDSRYMSAEEQSR) form a disordered region. Positions 2822–2852 (AQQTHENGDDGRTTSNSGTIGPLPNLGQSVK) are disordered. The WW domain occupies 2849–2882 (QSVKPPWERATTAANVPYYIDHERETTHWDHPEM). A ZZ-type zinc finger spans residues 3107 to 3163 (KHQAKCNICKEYPIVGFRYRCLKCFNFDMCQKCFFFGRNAKNHKLTHPMHEYCTTTT). Positions 3112, 3115, 3127, 3130, 3136, 3139, 3149, and 3153 each coordinate Zn(2+). Ser-3207 is modified (phosphoserine). Disordered regions lie at residues 3316-3344 (EQSG…GEQG), 3387-3449 (DEPN…KGIM), 3483-3545 (LHQQ…QQHL), and 3560-3598 (ELES…ELQK). Composition is skewed to polar residues over residues 3325–3337 (NGMQ…MTGL) and 3408–3439 (ALNS…QQNG). Over residues 3485 to 3499 (QQQQQQLQQQPPQQQ) the composition is skewed to low complexity. Residues 3505–3523 (GNGGMDISGGMQTSGGYLG) show a composition bias toward gly residues. A compositionally biased stretch (low complexity) spans 3534–3545 (SSLMQQQHQQHL). The segment covering 3560 to 3570 (ELESINDDLED) has biased composition (acidic residues). Positions 3571–3589 (SSSSNTTNTTTTTTTTATT) are enriched in low complexity.

In terms of assembly, component of the dystrophin associated protein complex (DAPC). Interacts with Dg, via the Dg WW domain binding sites. Isoform A, isoform F and isoform G are expressed in the midgut endoderm of stage 12 embryos. In stage 16 embryos, expression is also seen in the pericardial cells, cells at the ectoderm segmental border and cells along the midline of the CNS. During embryogenesis, isoform A is also expressed in the visceral mesoderm, muscle attachment sites, mesectodermal cells at the midline, the gut, and throughout muscle fibers. In larvae, isoform A is found in all muscle fibers, but not detectable in the brain or neuropil.

The protein resides in the cell membrane. It is found in the sarcolemma. Its subcellular location is the cytoplasm. The protein localises to the cytoskeleton. Required for the maintenance of appropriate synaptic retrograde communication and the stabilization of muscle cell architecture or physiology. Both det and Dg are required for maintenance of early dpp signaling in the presumptive crossvein. Isoform A is not required to maintain muscle integrity, but plays a role in neuromuscular homeostasis by regulating neurotransmitter release. May play a role in anchoring the cytoskeleton to the plasma membrane. In Drosophila melanogaster (Fruit fly), this protein is Dystrophin, isoforms A/C/F/G/H (Dys).